A 489-amino-acid chain; its full sequence is MAAVTQFLSQPSSIRGTLNQYQLNQTSLSRIPFLSLKSTLKPLKRLSVKAAVSQNSTKTLTKESASSFDHCFKKSSDGFLYCEGTKVQDIMETVEKRPFYLYSKPQITRNLEAYKEALEGVRSVIGYAIKANNNLKILEHLRSLGCGAVLVSGNELRLALLAGFDPTKCIFNGNGKSLEDLVLAAQEGVFVNVDSEFDLNNIVEASRISGKQVNVLLRINPDVDPQVHPYVATGNKNSKFGIRNEKLQWFLDEVKAHPKELKLVGAHCHLGSTITKVDIFRDAAVLMIEYIDEIRRQGFEVSYLNIGGGLGIDYYHAGAVLPTPMDLINTVRELVLSRDLNLIIEPGRSLIANTCCFVNHVTGVKTNGTKNFIVIDGSMAELIRPSLYDAYQHIELVSPTPPEAEVTKFDVVGPVCESADFLGKDRELPTPPQGAGLVVHDAGAYCMSMASTYNLKMRPPEYWVEEDGSITKIRHAETFDDHLRFFEGL.

The N-terminal 50 residues, 1–50 (MAAVTQFLSQPSSIRGTLNQYQLNQTSLSRIPFLSLKSTLKPLKRLSVKA), are a transit peptide targeting the chloroplast. Residue A51 is modified to N-acetylalanine. Position 130 is an N6-(pyridoxal phosphate)lysine (K130). Residues G309 and 345–348 (EPGR) contribute to the pyridoxal 5'-phosphate site. Substrate-binding residues include R348, R384, and Y388. C416 functions as the Proton donor in the catalytic mechanism. Substrate contacts are provided by E417 and Y445. Residue Y445 coordinates pyridoxal 5'-phosphate.

Belongs to the Orn/Lys/Arg decarboxylase class-II family. LysA subfamily. As to quaternary structure, homodimer. Pyridoxal 5'-phosphate is required as a cofactor.

The protein localises to the plastid. It localises to the chloroplast. The catalysed reaction is meso-2,6-diaminopimelate + H(+) = L-lysine + CO2. It functions in the pathway amino-acid biosynthesis; L-lysine biosynthesis via DAP pathway; L-lysine from DL-2,6-diaminopimelate: step 1/1. In terms of biological role, specifically catalyzes the decarboxylation of meso-diaminopimelate (meso-DAP) to L-lysine. The polypeptide is Diaminopimelate decarboxylase 2, chloroplastic (LYSA2) (Arabidopsis thaliana (Mouse-ear cress)).